Reading from the N-terminus, the 402-residue chain is Imidazolonepropionase (402 aa).

Histidine 69 and histidine 71 together coordinate Fe(3+). Zn(2+)-binding residues include histidine 69 and histidine 71. 4-imidazolone-5-propanoate contacts are provided by arginine 78, tyrosine 141, and histidine 174. Tyrosine 141 lines the N-formimidoyl-L-glutamate pocket. A Fe(3+)-binding site is contributed by histidine 239. Histidine 239 contacts Zn(2+). Glutamine 242 provides a ligand contact to 4-imidazolone-5-propanoate. Aspartate 314 contributes to the Fe(3+) binding site. Zn(2+) is bound at residue aspartate 314. Residues asparagine 316 and glycine 318 each coordinate N-formimidoyl-L-glutamate. 4-imidazolone-5-propanoate is bound at residue threonine 319.

This sequence belongs to the metallo-dependent hydrolases superfamily. HutI family. Zn(2+) serves as cofactor. It depends on Fe(3+) as a cofactor.

Its subcellular location is the cytoplasm. The catalysed reaction is 4-imidazolone-5-propanoate + H2O = N-formimidoyl-L-glutamate. The protein operates within amino-acid degradation; L-histidine degradation into L-glutamate; N-formimidoyl-L-glutamate from L-histidine: step 3/3. Catalyzes the hydrolytic cleavage of the carbon-nitrogen bond in imidazolone-5-propanoate to yield N-formimidoyl-L-glutamate. It is the third step in the universal histidine degradation pathway. In Maricaulis maris (strain MCS10) (Caulobacter maris), this protein is Imidazolonepropionase.